We begin with the raw amino-acid sequence, 365 residues long: Class I histocompatibility antigen, B alpha chain (365 aa).

The signal sequence occupies residues 1–24 (MTVMAPRTLLLLLSGALVLTETWA). Positions 25–114 (GSHSMRYFST…ALGYYNQSEA (90 aa)) are alpha-1. The Extracellular portion of the chain corresponds to 25–308 (GSHSMRYFST…EPPSQPTIPI (284 aa)). A glycan (N-linked (GlcNAc...) asparagine) is linked at Asn110. An alpha-2 region spans residues 115-206 (GSHTIQMMSG…ENGKETLQRA (92 aa)). 2 cysteine pairs are disulfide-bonded: Cys125–Cys188 and Cys227–Cys283. The alpha-3 stretch occupies residues 207 to 298 (EPPKTHVTHH…GLPEPLTLRW (92 aa)). Residues 209-297 (PKTHVTHHPV…EGLPEPLTLR (89 aa)) form the Ig-like C1-type domain. The segment at 299 to 308 (EPPSQPTIPI) is connecting peptide. The chain crosses the membrane as a helical span at residues 309–332 (MGIVAILAILGAVVTGAVVTAVMW). The Cytoplasmic segment spans residues 333-365 (RKKSSDKKGGSYSQAARSDSAQGSDVSLTACKV). Residues 337–361 (SDKKGGSYSQAARSDSAQGSDVSLT) form a disordered region. Residues 346–359 (QAARSDSAQGSDVS) are compositionally biased toward polar residues. A phosphoserine mark is found at Ser356 and Ser359.

It belongs to the MHC class I family. In terms of assembly, heterodimer of an alpha chain and a beta chain (beta-2-microglobulin).

Its subcellular location is the membrane. Functionally, involved in the presentation of foreign antigens to the immune system. This Saguinus oedipus (Cotton-top tamarin) protein is Class I histocompatibility antigen, B alpha chain.